Here is a 160-residue protein sequence, read N- to C-terminus: 6,7-dimethyl-8-ribityllumazine synthase (160 aa).

Residues Phe22, 57 to 59 (AVE), and 81 to 83 (AVI) each bind 5-amino-6-(D-ribitylamino)uracil. 86–87 (GT) provides a ligand contact to (2S)-2-hydroxy-3-oxobutyl phosphate. The Proton donor role is filled by His89. Phe114 serves as a coordination point for 5-amino-6-(D-ribitylamino)uracil. Residue Arg128 participates in (2S)-2-hydroxy-3-oxobutyl phosphate binding.

This sequence belongs to the DMRL synthase family. Forms an icosahedral capsid composed of 60 subunits, arranged as a dodecamer of pentamers.

The enzyme catalyses (2S)-2-hydroxy-3-oxobutyl phosphate + 5-amino-6-(D-ribitylamino)uracil = 6,7-dimethyl-8-(1-D-ribityl)lumazine + phosphate + 2 H2O + H(+). It functions in the pathway cofactor biosynthesis; riboflavin biosynthesis; riboflavin from 2-hydroxy-3-oxobutyl phosphate and 5-amino-6-(D-ribitylamino)uracil: step 1/2. Catalyzes the formation of 6,7-dimethyl-8-ribityllumazine by condensation of 5-amino-6-(D-ribitylamino)uracil with 3,4-dihydroxy-2-butanone 4-phosphate. This is the penultimate step in the biosynthesis of riboflavin. The chain is 6,7-dimethyl-8-ribityllumazine synthase from Shewanella sediminis (strain HAW-EB3).